We begin with the raw amino-acid sequence, 273 residues long: Suppressor protein STM1 (273 aa).

The segment at 1 to 153 (MSNPFDLLGN…PKTAQLSLQD (153 aa)) is disordered. At S2 the chain carries N-acetylserine. S32, S41, and S45 each carry phosphoserine; by MTOR. K46 is covalently cross-linked (Glycyl lysine isopeptide (Lys-Gly) (interchain with G-Cter in ubiquitin)). Phosphoserine; by MTOR is present on residues S55 and S73. Position 55 is a phosphoserine (S55). Composition is skewed to basic and acidic residues over residues 60 to 77 (AIRD…KDVT), 89 to 104 (RATD…DTKK), and 111 to 124 (GDDK…KEAQ). Phosphoserine is present on S118. Glycyl lysine isopeptide (Lys-Gly) (interchain with G-Cter in ubiquitin) cross-links involve residues K121 and K171. T181 bears the Phosphothreonine; by MTOR mark. K184 participates in a covalent cross-link: Glycyl lysine isopeptide (Lys-Gly) (interchain with G-Cter in ubiquitin). At T218 the chain carries Phosphothreonine; by MTOR. Positions 219 to 273 (RKNFGDRNNNSRNNFNNRRGGRGARKGNNTANATNSANTVQKNRNIDVSNLPSLA) are disordered. Composition is skewed to low complexity over residues 224–236 (DRNN…FNNR) and 244–257 (KGNN…SANT). Position 229 is a phosphoserine (S229). Residues 258 to 273 (VQKNRNIDVSNLPSLA) are compositionally biased toward polar residues.

This sequence belongs to the SERBP1-HABP4 family. As to quaternary structure, associates with mature 80S ribosomes. Binds to the head domain of the 40S ribosomal subunit and prevents mRNA binding by inserting its alpha-helix domain towards the mRNA entry tunnel at the decoding site, where it blocks the binding of tRNA and mRNA at the A- and P-sites. Interacts with EFT1; interaction sequesters EFT1 at the A-site of the ribosome, thereby blocking the interaction sites of the mRNA-tRNA complex, promoting ribosome stabilization and hibernation. Interacts with CDC13. Associates with the telomere-proximal Y' element. In terms of processing, phosphorylation by TORC1 upon nutrient replenishment inhibits STM1 and causes its release from dormant ribosomes.

The protein localises to the cytoplasm. The protein resides in the nucleus. It localises to the perinuclear region. Functionally, ribosome preservation factor that protect a small pool of nontranslating, vacant ribosomes in cells under nutrient starvation conditions. Under nutrient-limiting conditions, cells reduce ribosome biogenesis and degrade ribosomes via autophagy (ribophagy) or proteasomal degradation. To avoid excessive degradation during starvation, STM1 binds to and protects 80S ribosomes from proteasomal degradation. Under nutrient-sufficient conditions, TORC1 phosphorylates and inhibits STM1 to prevent formation of dormant 80S ribosomes. Acts as an inhibitor of mRNA translation by promoting ribosome hibernation: clamps the two ribosomal subunits, thereby preventing their dissociation, and inhibits translation by excluding mRNA-binding. Acts via its association with eEF2 (EFT1), promoting ribosome stabilization and storage in an inactive state. May also repress translation by preventing association of eEF3 (YEF3 and HEF3) with ribosomes. Binds specifically G4 quadruplex (these are four-stranded right-handed helices, stabilized by guanine base quartets) and purine motif triplex (characterized by a third, antiparallel purine-rich DNA strand located within the major groove of a homopurine stretch of duplex DNA) nucleic acid structures. These structures may be present at telomeres or in rRNAs. Acts with CDC13 to control telomere length homeostasis. Involved in the control of the apoptosis-like cell death. The protein is Suppressor protein STM1 of Saccharomyces cerevisiae (strain ATCC 204508 / S288c) (Baker's yeast).